The chain runs to 558 residues: Potassium-transporting ATPase potassium-binding subunit (558 aa).

The next 12 membrane-spanning stretches (helical) occupy residues 2 to 22 (LQGF…APLL), 66 to 86 (VSAA…ILMF), 135 to 155 (ALGF…IAFI), 177 to 197 (ILLP…VPET), 253 to 273 (LLET…YGIM), 280 to 300 (GWLI…IAAV), 327 to 347 (FGWV…CGAV), 354 to 374 (LMPP…IWGG), 378 to 398 (GTAY…LMVG), 413 to 433 (IVLA…PTAI), 482 to 502 (LSAS…LIFL), and 528 to 548 (GITA…ILVL).

This sequence belongs to the KdpA family. As to quaternary structure, the system is composed of three essential subunits: KdpA, KdpB and KdpC.

Its subcellular location is the cell inner membrane. In terms of biological role, part of the high-affinity ATP-driven potassium transport (or Kdp) system, which catalyzes the hydrolysis of ATP coupled with the electrogenic transport of potassium into the cytoplasm. This subunit binds the periplasmic potassium ions and delivers the ions to the membrane domain of KdpB through an intramembrane tunnel. This is Potassium-transporting ATPase potassium-binding subunit from Synechocystis sp. (strain ATCC 27184 / PCC 6803 / Kazusa).